A 494-amino-acid chain; its full sequence is Glycerol kinase (494 aa).

T12 contributes to the ADP binding site. Residues T12, T13, and S14 each coordinate ATP. T12 provides a ligand contact to sn-glycerol 3-phosphate. Position 16 (R16) interacts with ADP. Positions 82, 83, 135, and 244 each coordinate sn-glycerol 3-phosphate. Positions 82, 83, 135, 244, and 245 each coordinate glycerol. T266 and G309 together coordinate ADP. T266, G309, Q313, and G409 together coordinate ATP. The ADP site is built by G409 and N413.

Belongs to the FGGY kinase family.

The catalysed reaction is glycerol + ATP = sn-glycerol 3-phosphate + ADP + H(+). Its pathway is polyol metabolism; glycerol degradation via glycerol kinase pathway; sn-glycerol 3-phosphate from glycerol: step 1/1. Its activity is regulated as follows. Inhibited by fructose 1,6-bisphosphate (FBP). Its function is as follows. Key enzyme in the regulation of glycerol uptake and metabolism. Catalyzes the phosphorylation of glycerol to yield sn-glycerol 3-phosphate. This is Glycerol kinase from Alteromonas mediterranea (strain DSM 17117 / CIP 110805 / LMG 28347 / Deep ecotype).